A 346-amino-acid polypeptide reads, in one-letter code: D-erythrose-4-phosphate dehydrogenase (346 aa).

11 to 12 (RI) lines the NAD(+) pocket. Substrate-binding positions include 163–165 (SCT), Arg-209, 222–223 (TK), and Arg-245. Cys-164 (nucleophile) is an active-site residue. Residue Asn-327 coordinates NAD(+).

Belongs to the glyceraldehyde-3-phosphate dehydrogenase family. Epd subfamily. Homotetramer.

The protein localises to the cytoplasm. The enzyme catalyses D-erythrose 4-phosphate + NAD(+) + H2O = 4-phospho-D-erythronate + NADH + 2 H(+). The protein operates within cofactor biosynthesis; pyridoxine 5'-phosphate biosynthesis; pyridoxine 5'-phosphate from D-erythrose 4-phosphate: step 1/5. In terms of biological role, catalyzes the NAD-dependent conversion of D-erythrose 4-phosphate to 4-phosphoerythronate. This chain is D-erythrose-4-phosphate dehydrogenase, found in Vibrio vulnificus (strain YJ016).